Reading from the N-terminus, the 372-residue chain is Glutamate 5-kinase (372 aa).

Lysine 14 is an ATP binding site. Residues serine 54, aspartate 141, and asparagine 153 each contribute to the substrate site. 173–174 (TD) contributes to the ATP binding site. Positions 280-358 (RGHVVIDAGA…GEIETVLGYM (79 aa)) constitute a PUA domain.

The protein belongs to the glutamate 5-kinase family.

The protein resides in the cytoplasm. It catalyses the reaction L-glutamate + ATP = L-glutamyl 5-phosphate + ADP. It functions in the pathway amino-acid biosynthesis; L-proline biosynthesis; L-glutamate 5-semialdehyde from L-glutamate: step 1/2. Functionally, catalyzes the transfer of a phosphate group to glutamate to form L-glutamate 5-phosphate. In Burkholderia orbicola (strain AU 1054), this protein is Glutamate 5-kinase.